The chain runs to 156 residues: Ribonuclease H (156 aa).

Residues 2-144 (TMKNVQAFTD…CDVLARTQAS (143 aa)) form the RNase H type-1 domain. Positions 11, 49, 71, and 136 each coordinate Mg(2+).

This sequence belongs to the RNase H family. In terms of assembly, monomer. Requires Mg(2+) as cofactor.

It localises to the cytoplasm. It carries out the reaction Endonucleolytic cleavage to 5'-phosphomonoester.. Functionally, endonuclease that specifically degrades the RNA of RNA-DNA hybrids. In Nitratidesulfovibrio vulgaris (strain DSM 19637 / Miyazaki F) (Desulfovibrio vulgaris), this protein is Ribonuclease H.